We begin with the raw amino-acid sequence, 205 residues long: CASP-like protein 0U1 (205 aa).

The Cytoplasmic portion of the chain corresponds to 1–66 (MSGGDIDPTA…GYHKFAVFQF (66 aa)). The 153-residue stretch at 10 to 162 (AINSPKFRLI…SMMFTWKEWR (153 aa)) folds into the MARVEL domain. Residues 67–87 (LVVICVTYWLFTMLWMGMYLI) form a helical membrane-spanning segment. At 88-90 (QKV) the chain is on the extracellular side. The chain crosses the membrane as a helical span at residues 91–111 (PPAGTEFMIYAVFNVLILIAF). The Cytoplasmic portion of the chain corresponds to 112-137 (STSWTECNETIVDPTYPVCKRATGAK). Residues 138 to 158 (ASIAFAMFTWLALCVSMMFTW) traverse the membrane as a helical segment. The Extracellular portion of the chain corresponds to 159–167 (KEWRDQNYE). Residues 168–188 (GLPIFGDFSSFMPGGGGGGMG) form a helical membrane-spanning segment. Over 189-205 (GGGGYERPSDVNTQTYA) the chain is Cytoplasmic.

The protein belongs to the Casparian strip membrane proteins (CASP) family. Homodimer and heterodimers.

The protein resides in the cell membrane. The chain is CASP-like protein 0U1 from Micromonas pusilla (strain CCMP1545) (Picoplanktonic green alga).